The sequence spans 574 residues: 5'-nucleotidase (574 aa).

A signal peptide spans Met1 to Pro26. Zn(2+) contacts are provided by Asp36 and His38. A disulfide bond links Cys51 and Cys57. The N-linked (GlcNAc...) asparagine glycan is linked to Asn53. Asp85, Asn117, His220, and His243 together coordinate Zn(2+). Residues Asn311 and Asn333 are each glycosylated (N-linked (GlcNAc...) asparagine). Disulfide bonds link Cys353-Cys358 and Cys365-Cys387. Arg354 serves as a coordination point for AMP. Arg354 lines the IMP pocket. The AMP site is built by Asn390 and Arg395. IMP-binding residues include Asn390 and Arg395. Asn403 carries N-linked (GlcNAc...) asparagine glycosylation. Residue Phe417 participates in AMP binding. Phe417 contacts IMP. An intrachain disulfide couples Cys476 to Cys479. AMP contacts are provided by Phe500 and Asp506. Phe500 and Asp506 together coordinate IMP. The GPI-anchor amidated serine moiety is linked to residue Ser549. A propeptide spans Ala550–Gln574 (removed in mature form).

The protein belongs to the 5'-nucleotidase family. As to quaternary structure, homodimer. Requires Zn(2+) as cofactor.

It is found in the cell membrane. It catalyses the reaction a ribonucleoside 5'-phosphate + H2O = a ribonucleoside + phosphate. The enzyme catalyses a 2'-deoxyribonucleoside 5'-phosphate + H2O = a 2'-deoxyribonucleoside + phosphate. The catalysed reaction is dTMP + H2O = thymidine + phosphate. It carries out the reaction CMP + H2O = cytidine + phosphate. It catalyses the reaction IMP + H2O = inosine + phosphate. The enzyme catalyses AMP + H2O = adenosine + phosphate. The catalysed reaction is GMP + H2O = guanosine + phosphate. It carries out the reaction UMP + H2O = uridine + phosphate. It catalyses the reaction dAMP + H2O = 2'-deoxyadenosine + phosphate. The enzyme catalyses dCMP + H2O = 2'-deoxycytidine + phosphate. In terms of biological role, catalyzes the hydrolysis of nucleotide monophosphates, releasing inorganic phosphate and the corresponding nucleoside, with AMP being the preferred substrate. Shows a preference for ribonucleotide monophosphates over their equivalent deoxyribose forms. Other substrates include IMP, UMP, GMP, CMP, dAMP, dCMP, dTMP, NAD and NMN. This Bos taurus (Bovine) protein is 5'-nucleotidase (NT5E).